Consider the following 172-residue polypeptide: Thioredoxin M-type, chloroplastic (172 aa).

The transit peptide at 1 to 60 (MALESLFKSIHTKTSLSSSIVFIFKGKACLLTSKSRIQESFAELNSFTSLVLLIENHVLL) directs the protein to the chloroplast. Positions 61 to 172 (HAREAVNEVQ…TLSEKVEKYI (112 aa)) constitute a Thioredoxin domain. Active-site nucleophile residues include Cys97 and Cys100. A disulfide bridge links Cys97 with Cys100.

It belongs to the thioredoxin family. Plant M-type subfamily. In terms of assembly, forms a complex with heterodimeric ferredoxin-thioredoxin reductase (FTR) and ferredoxin.

The protein localises to the plastid. The protein resides in the chloroplast. Its function is as follows. Participates in various redox reactions through the reversible oxidation of the active center dithiol to a disulfide. The M form is known to activate NADP-malate dehydrogenase. The protein is Thioredoxin M-type, chloroplastic of Pisum sativum (Garden pea).